Here is a 244-residue protein sequence, read N- to C-terminus: Lipoprotein-releasing system ATP-binding protein LolD (244 aa).

Residues 19 to 244 (IRAEALAKTY…KLRELAPSAV (226 aa)) enclose the ABC transporter domain. 55-62 (GASGAGKS) contributes to the ATP binding site.

The protein belongs to the ABC transporter superfamily. Lipoprotein translocase (TC 3.A.1.125) family. The complex is composed of two ATP-binding proteins (LolD) and two transmembrane proteins (LolC and LolE).

Its subcellular location is the cell inner membrane. Functionally, part of the ABC transporter complex LolCDE involved in the translocation of mature outer membrane-directed lipoproteins, from the inner membrane to the periplasmic chaperone, LolA. Responsible for the formation of the LolA-lipoprotein complex in an ATP-dependent manner. This is Lipoprotein-releasing system ATP-binding protein LolD from Xanthomonas euvesicatoria pv. vesicatoria (strain 85-10) (Xanthomonas campestris pv. vesicatoria).